Reading from the N-terminus, the 253-residue chain is MEFVVVIPARYASSRLPGKPLADICGKPMIQHVYEKACLSGASKVVIATDHQKVFDAVSTFTSDVLMTREDHQSGTERLAEVVDLLKLDNNTIVVNVQGDEPLLAPENVSQVATLLNESTAPMATLSVAIEEQEDVFNPNAVKVVSDINKNALYFSRASIPFDRSAMMGEQSTLDLTPFQRHVGIYAYRAGFIKQYIELSVSPLEQLESLEQLRVLYHGYNIKIEQAHITPQAGVDTPEDLAKVISYLQSKHA.

The protein belongs to the KdsB family.

It is found in the cytoplasm. It catalyses the reaction 3-deoxy-alpha-D-manno-oct-2-ulosonate + CTP = CMP-3-deoxy-beta-D-manno-octulosonate + diphosphate. It functions in the pathway nucleotide-sugar biosynthesis; CMP-3-deoxy-D-manno-octulosonate biosynthesis; CMP-3-deoxy-D-manno-octulosonate from 3-deoxy-D-manno-octulosonate and CTP: step 1/1. It participates in bacterial outer membrane biogenesis; lipopolysaccharide biosynthesis. Its function is as follows. Activates KDO (a required 8-carbon sugar) for incorporation into bacterial lipopolysaccharide in Gram-negative bacteria. The protein is 3-deoxy-manno-octulosonate cytidylyltransferase of Pseudoalteromonas translucida (strain TAC 125).